Consider the following 129-residue polypeptide: Small ribosomal subunit protein uS11 (129 aa).

Belongs to the universal ribosomal protein uS11 family. As to quaternary structure, part of the 30S ribosomal subunit. Interacts with proteins S7 and S18. Binds to IF-3.

Located on the platform of the 30S subunit, it bridges several disparate RNA helices of the 16S rRNA. Forms part of the Shine-Dalgarno cleft in the 70S ribosome. This is Small ribosomal subunit protein uS11 from Azorhizobium caulinodans (strain ATCC 43989 / DSM 5975 / JCM 20966 / LMG 6465 / NBRC 14845 / NCIMB 13405 / ORS 571).